We begin with the raw amino-acid sequence, 248 residues long: UPF0246 protein MYPE6270 (248 aa).

Belongs to the UPF0246 family.

The sequence is that of UPF0246 protein MYPE6270 from Malacoplasma penetrans (strain HF-2) (Mycoplasma penetrans).